We begin with the raw amino-acid sequence, 98 residues long: Scrapie-responsive protein 1 (98 aa).

The signal sequence occupies residues 1-20 (MKLMVLVFTIGLTLLLGVQA). An N-linked (GlcNAc...) asparagine glycan is attached at Asn-72.

Belongs to the SCRG1 family. In terms of tissue distribution, expressed abundantly in the central nervous system of adult, but not at all in fetal brain. High levels of SCRG1 transcripts are also observed in testis and aorta.

It localises to the secreted. This is Scrapie-responsive protein 1 (SCRG1) from Homo sapiens (Human).